The sequence spans 994 residues: Chloride channel protein E (994 aa).

The disordered stretch occupies residues 1-33 (MTRKENEESESLSSSSSPIDNSNNNNNNNNHSI). Over 1 to 163 (MTRKENEESE…HWLGKERIST (163 aa)) the chain is Cytoplasmic. Residues 11–32 (SLSSSSSPIDNSNNNNNNNNHS) show a composition bias toward low complexity. Transmembrane regions (helical) follow at residues 164 to 184 (LLFIPTLGILIALMGILCDFL), 227 to 247 (IVFVGYSVFFALISVCCISFI), 271 to 291 (VLGFKTLVSKIVGMVCASAAG), 300 to 320 (FMHASAIISQMLMNLKVFGAI), 334 to 354 (ALTSGVVANFGAPIGGLLFAI), 362 to 382 (VMGNLWKGFLCATTTAIIFFL), 410 to 430 (LITFVGIGIITGLIGAFFVFI), 449 to 469 (IILVLVVSLFSAIITYSAGPL), 505 to 525 (LLVFIVVKLILTAFNIVLPIP), 527 to 547 (GAITPFIVTGAALGRLFGEIL), and 554 to 574 (QAIEPAGFAAIASAGLVSGTI). Residues 644-705 (MKKNINYLSM…LDIHIENIEQ (62 aa)) form the CBS 1 domain. 3 disordered regions span residues 715–767 (FVNN…NSEN), 802–822 (IKPNQDESSSNSNGGSSSDFE), and 846–872 (DENSSLGEKPIIEHDDEDDDEEEGDGI). Composition is skewed to low complexity over residues 717 to 764 (NNNN…NSNN) and 809 to 822 (SSSNSNGGSSSDFE). A compositionally biased stretch (acidic residues) spans 859-870 (HDDEDDDEEEGD). A CBS 2 domain is found at 944–994 (MDLAPSQVPDLTPLNKVFHLFTMLGLGFTYVTSLGKLVGVITKNSLMEQDL).

This sequence belongs to the chloride channel (TC 2.A.49) family.

The protein resides in the membrane. In terms of biological role, voltage-gated chloride channel. Chloride channels may have several functions including the regulation of cell volume, membrane potential stabilization and signal transduction. The chain is Chloride channel protein E (clcE) from Dictyostelium discoideum (Social amoeba).